A 218-amino-acid chain; its full sequence is Deoxyribose-phosphate aldolase (218 aa).

The active-site Proton donor/acceptor is D89. Catalysis depends on K152, which acts as the Schiff-base intermediate with acetaldehyde. K182 serves as the catalytic Proton donor/acceptor.

It belongs to the DeoC/FbaB aldolase family. DeoC type 1 subfamily.

It localises to the cytoplasm. The catalysed reaction is 2-deoxy-D-ribose 5-phosphate = D-glyceraldehyde 3-phosphate + acetaldehyde. It functions in the pathway carbohydrate degradation; 2-deoxy-D-ribose 1-phosphate degradation; D-glyceraldehyde 3-phosphate and acetaldehyde from 2-deoxy-alpha-D-ribose 1-phosphate: step 2/2. Catalyzes a reversible aldol reaction between acetaldehyde and D-glyceraldehyde 3-phosphate to generate 2-deoxy-D-ribose 5-phosphate. The polypeptide is Deoxyribose-phosphate aldolase (Kocuria rhizophila (strain ATCC 9341 / DSM 348 / NBRC 103217 / DC2201)).